The sequence spans 917 residues: Intercellular adhesion molecule 5 (917 aa).

The signal sequence occupies residues 1 to 31 (MPGPSPGLRRALLGLWAALGLGILGISAVAL). Over 32–833 (EPFWADLQPR…RITVRVAGPW (802 aa)) the chain is Extracellular. 9 consecutive Ig-like C2-type domains span residues 48 to 130 (GGSL…PLPS), 135 to 235 (GENF…SLIA), 242 to 329 (DSER…LLTL), 337 to 402 (GKMV…SSEL), 408 to 486 (PRLD…VTLT), 491 to 567 (PALD…VAVT), 572 to 651 (PSFE…NRHG), 665 to 738 (PQMD…RTVT), and 745 to 828 (PVVA…ITVR). Asn-54 is a glycosylation site (N-linked (GlcNAc...) (high mannose) asparagine). Disulfide bonds link Cys-55-Cys-99 and Cys-59-Cys-103. 2 N-linked (GlcNAc...) asparagine glycosylation sites follow: Asn-74 and Asn-137. Residues Cys-142 and Cys-198 are joined by a disulfide bond. The residue at position 182 (Thr-182) is a Phosphothreonine. Residues Asn-195, Asn-214, Asn-274, Asn-316, Asn-371, and Asn-397 are each glycosylated (N-linked (GlcNAc...) asparagine). Residues Cys-249 and Cys-302 are joined by a disulfide bond. Cysteines 344 and 383 form a disulfide. Cystine bridges form between Cys-415–Cys-470, Cys-498–Cys-551, and Cys-579–Cys-644. N-linked (GlcNAc...) asparagine glycans are attached at residues Asn-582 and Asn-645. Cys-672 and Cys-724 are oxidised to a cystine. N-linked (GlcNAc...) asparagine glycosylation is found at Asn-762, Asn-793, and Asn-794. Cysteines 767 and 812 form a disulfide. A helical transmembrane segment spans residues 834–854 (LWVAVGGAAGGAALLAAGAGL). Residues 855 to 917 (AFYVQSTACK…EVFAIQLTSS (63 aa)) lie on the Cytoplasmic side of the membrane. The span at 884-893 (GAGGTPGAEG) shows a compositional bias: gly residues. The disordered stretch occupies residues 884–908 (GAGGTPGAEGGAETPGTAESPADGE).

It belongs to the immunoglobulin superfamily. ICAM family. Glycosylation at Asn-54 is critical for functional folding. Expressed on neurons in the most rostral segment of the mammalian brain, the telencephalon.

It localises to the membrane. In terms of biological role, ICAM proteins are ligands for the leukocyte adhesion protein LFA-1 (integrin alpha-L/beta-2). The protein is Intercellular adhesion molecule 5 (Icam5) of Mus musculus (Mouse).